The primary structure comprises 166 residues: Cyanate hydratase (166 aa).

Active-site residues include Arg-92, Glu-95, and Ser-118.

It belongs to the cyanase family.

The enzyme catalyses cyanate + hydrogencarbonate + 3 H(+) = NH4(+) + 2 CO2. Its function is as follows. Catalyzes the reaction of cyanate with bicarbonate to produce ammonia and carbon dioxide. The protein is Cyanate hydratase of Sorghum bicolor (Sorghum).